The chain runs to 502 residues: Probable cytosol aminopeptidase (502 aa).

Mn(2+) is bound by residues Lys254 and Asp259. Lys266 is an active-site residue. Mn(2+) is bound by residues Asp277, Asp336, and Glu338. The active site involves Arg340.

Belongs to the peptidase M17 family. It depends on Mn(2+) as a cofactor.

It is found in the cytoplasm. It carries out the reaction Release of an N-terminal amino acid, Xaa-|-Yaa-, in which Xaa is preferably Leu, but may be other amino acids including Pro although not Arg or Lys, and Yaa may be Pro. Amino acid amides and methyl esters are also readily hydrolyzed, but rates on arylamides are exceedingly low.. The catalysed reaction is Release of an N-terminal amino acid, preferentially leucine, but not glutamic or aspartic acids.. Presumably involved in the processing and regular turnover of intracellular proteins. Catalyzes the removal of unsubstituted N-terminal amino acids from various peptides. The chain is Probable cytosol aminopeptidase from Tropheryma whipplei (strain TW08/27) (Whipple's bacillus).